Reading from the N-terminus, the 262-residue chain is Ribosomal RNA small subunit methyltransferase A (262 aa).

S-adenosyl-L-methionine contacts are provided by His-16, Leu-18, Gly-43, Glu-64, Asp-89, and Asn-109.

This sequence belongs to the class I-like SAM-binding methyltransferase superfamily. rRNA adenine N(6)-methyltransferase family. RsmA subfamily.

It localises to the cytoplasm. The catalysed reaction is adenosine(1518)/adenosine(1519) in 16S rRNA + 4 S-adenosyl-L-methionine = N(6)-dimethyladenosine(1518)/N(6)-dimethyladenosine(1519) in 16S rRNA + 4 S-adenosyl-L-homocysteine + 4 H(+). Specifically dimethylates two adjacent adenosines (A1518 and A1519) in the loop of a conserved hairpin near the 3'-end of 16S rRNA in the 30S particle. May play a critical role in biogenesis of 30S subunits. This Xanthomonas oryzae pv. oryzae (strain MAFF 311018) protein is Ribosomal RNA small subunit methyltransferase A.